The following is a 1286-amino-acid chain: CLIP-associating protein 2 (1286 aa).

The golgi localization stretch occupies residues 1 to 40 (MRRLICKRICDYKSFDDEESVDGNRPSSAASAFKVPAPKT). Phosphoserine is present on residues Ser-14 and Ser-20. Residues 17-67 (DEESVDGNRPSSAASAFKVPAPKTPGNPVSSARKPGSAGGPKVGGPSKEGG) form a disordered region. A compositionally biased stretch (gly residues) spans 53–67 (SAGGPKVGGPSKEGG). A TOG 1 region spans residues 66 to 317 (GGAGAVDEDD…KSLQTYLKSS (252 aa)). HEAT repeat units lie at residues 179-214 (HGAEAIVPTLFNLVPNSAKVMATSGCAAIRFIIRHT), 215-251 (HVPRLIPLITSNCTSKSVPVRRRSFEFLDLLLQEWQT), and 256-293 (RHAAVLVETIKKGIHDADAEARVEARKTYMGLRNHFPG). Residues 320-374 (VASLPQSDRSSSSSQESLNRPFSSKWSTANPSTVAGRVSVGGSKANPLPGSLQRS) are disordered. Phosphoserine is present on residues Ser-322, Ser-333, and Ser-336. The segment covering 322–340 (SLPQSDRSSSSSQESLNRP) has biased composition (low complexity). The span at 341–352 (FSSKWSTANPST) shows a compositional bias: polar residues. A phosphoserine mark is found at Ser-374, Ser-376, and Ser-413. The tract at residues 411–473 (YASLEDTSDK…GSRSGSPGRV (63 aa)) is disordered. Positions 417–431 (TSDKMDGTASDDGRV) are enriched in basic and acidic residues. The tract at residues 450 to 565 (RGRSRTKMVS…GPGYGISQSS (116 aa)) is interaction with microtubules, MAPRE1 and MAPRE3. Residues 459 to 473 (SQSQPGSRSGSPGRV) are compositionally biased toward low complexity. Ser-461, Ser-465, Ser-469, Ser-484, and Ser-495 each carry phosphoserine. The interval 493 to 564 (SASAQKRSKI…LGPGYGISQS (72 aa)) is disordered. Residues 500-503 (SKIP) carry the SXIP motif 1; mediates interaction with MAPRE1 and targeting to microtubule plus ends motif. A Phosphoserine modification is found at Ser-513. An SXIP motif 2; mediates interaction with MAPRE1 and targeting to microtubule plus ends motif is present at residues 523-526 (SRIP). 7 positions are modified to phosphoserine: Ser-531, Ser-535, Ser-570, Ser-572, Ser-581, Ser-614, and Ser-620. A compositionally biased stretch (basic and acidic residues) spans 605-616 (RRYESYGMHSDD). Positions 605-638 (RRYESYGMHSDDDANSDASSACSERSYSSRNGSI) are disordered. Over residues 620-634 (SDASSACSERSYSSR) the composition is skewed to low complexity. Residues 642 to 873 (MRQTEDVAEV…TKLLHNHLRN (232 aa)) form a TOG 2 region. 2 HEAT repeats span residues 702–739 (KVFSMFLETLVDFIQVHKDDLQDWLFVLLTQLLKKMGA) and 764–801 (LQFNILMRFTVDQTQTPSLKVKVAILKYIETLAKQMDP). At Thr-779 the chain carries Phosphothreonine. The interaction with RSN and localization to the Golgi and kinetochores stretch occupies residues 864–1286 (TKLLHNHLRN…DPTADVSGQS (423 aa)). 2 disordered regions span residues 870–920 (HLRN…FDYD) and 944–989 (SFRS…SQPA). 2 stretches are compositionally biased toward polar residues: residues 872 to 884 (RNTGNGTQSSMGS) and 893 to 914 (SPANWSSPLTSPTNTSQNTLSP). Ser-884 is modified (phosphoserine). 4 positions are modified to phosphoserine: Ser-944, Ser-947, Ser-1005, and Ser-1021. Basic and acidic residues predominate over residues 947 to 964 (SQEDMSEPVRRDPKKEDG). Positions 1009–1286 (RDYNPYNYSD…DPTADVSGQS (278 aa)) are required for cortical localization. HEAT repeat units lie at residues 1046 to 1083 (LDHSDLVAELLKELSNHNERIEERKIALYELMKLTQEE), 1090 to 1127 (EHFKTILLLLLETLGDKEPTIRALALKVLKEILRHQPA), and 1208 to 1245 (MLLPEIMPGLIQGYDNSESSVRKACVFCLVAVHAVIGD).

The protein belongs to the CLASP family. As to quaternary structure, interacts with microtubules. Interacts with MAPRE1; probably required for targeting to growing microtubule plus ends. Interacts with ERC1, MAPRE3 and PHLDB2. The interaction with ERC1 may be mediated by PHLDB2. Interacts with GCC2; recruits CLASP2 to Golgi membranes. Interacts with CLIP2 and RSN. Interacts with MACF1. Interacts with mtcl2. Interacts with MTCL1. In terms of processing, phosphorylated by GSK3B. Phosphorylation by GSK3B may negatively regulate binding to microtubule lattices in lamella. Isoform 2 is phosphorylated on Ser-241. In terms of tissue distribution, highly expressed in brain and at low levels in heart, kidney and lung.

The protein resides in the cytoplasm. The protein localises to the cytoskeleton. It localises to the microtubule organizing center. Its subcellular location is the centrosome. It is found in the chromosome. The protein resides in the centromere. The protein localises to the kinetochore. It localises to the spindle. Its subcellular location is the spindle pole. It is found in the golgi apparatus. The protein resides in the trans-Golgi network. The protein localises to the cell membrane. It localises to the cell projection. Its subcellular location is the ruffle membrane. It is found in the cell cortex. Functionally, microtubule plus-end tracking protein that promotes the stabilization of dynamic microtubules. Involved in the nucleation of noncentrosomal microtubules originating from the trans-Golgi network (TGN). Required for the polarization of the cytoplasmic microtubule arrays in migrating cells towards the leading edge of the cell. May act at the cell cortex to enhance the frequency of rescue of depolymerizing microtubules by attaching their plus-ends to cortical platforms composed of ERC1 and PHLDB2. This cortical microtubule stabilizing activity is regulated at least in part by phosphatidylinositol 3-kinase signaling. Also performs a similar stabilizing function at the kinetochore which is essential for the bipolar alignment of chromosomes on the mitotic spindle. Acts as a mediator of ERBB2-dependent stabilization of microtubules at the cell cortex. The chain is CLIP-associating protein 2 (Clasp2) from Mus musculus (Mouse).